The following is a 284-amino-acid chain: Bifunctional protein FolD (284 aa).

Residues 166-168 (GAS) and Ile-232 each bind NADP(+).

The protein belongs to the tetrahydrofolate dehydrogenase/cyclohydrolase family. As to quaternary structure, homodimer.

The enzyme catalyses (6R)-5,10-methylene-5,6,7,8-tetrahydrofolate + NADP(+) = (6R)-5,10-methenyltetrahydrofolate + NADPH. The catalysed reaction is (6R)-5,10-methenyltetrahydrofolate + H2O = (6R)-10-formyltetrahydrofolate + H(+). The protein operates within one-carbon metabolism; tetrahydrofolate interconversion. Functionally, catalyzes the oxidation of 5,10-methylenetetrahydrofolate to 5,10-methenyltetrahydrofolate and then the hydrolysis of 5,10-methenyltetrahydrofolate to 10-formyltetrahydrofolate. This Glaesserella parasuis serovar 5 (strain SH0165) (Haemophilus parasuis) protein is Bifunctional protein FolD.